We begin with the raw amino-acid sequence, 299 residues long: CRISPR-associated endonuclease Cas1 3 (299 aa).

Mn(2+)-binding residues include glutamate 143, histidine 210, and aspartate 223.

It belongs to the CRISPR-associated endonuclease Cas1 family. Homodimer, forms a heterotetramer with a Cas2 homodimer. Mg(2+) is required as a cofactor. Requires Mn(2+) as cofactor.

Its function is as follows. CRISPR (clustered regularly interspaced short palindromic repeat), is an adaptive immune system that provides protection against mobile genetic elements (viruses, transposable elements and conjugative plasmids). CRISPR clusters contain spacers, sequences complementary to antecedent mobile elements, and target invading nucleic acids. CRISPR clusters are transcribed and processed into CRISPR RNA (crRNA). Acts as a dsDNA endonuclease. Involved in the integration of spacer DNA into the CRISPR cassette. The sequence is that of CRISPR-associated endonuclease Cas1 3 from Methanospirillum hungatei JF-1 (strain ATCC 27890 / DSM 864 / NBRC 100397 / JF-1).